A 343-amino-acid chain; its full sequence is Homeobox protein Hox-D13 (343 aa).

2 disordered regions span residues 1–28 (MSRA…SSSS) and 78–115 (GTSE…PAAA). Positions 85-115 (SSSSSSSSAVVAARPEAPPAKECPAPTPAAA) are enriched in low complexity. The segment at residues 276–335 (GRKKRVPYTKLQLKELENEYAINKFINKDKRRRISAATNLSERQVTIWFQNRRVKDKKIV) is a DNA-binding region (homeobox).

The protein belongs to the Abd-B homeobox family.

Its subcellular location is the nucleus. Its function is as follows. Sequence-specific transcription factor that binds gene promoters and activates their transcription. Part of a developmental regulatory system that provides cells with specific positional identities on the anterior-posterior axis. The chain is Homeobox protein Hox-D13 (HOXD13) from Homo sapiens (Human).